The chain runs to 386 residues: MERWPWPSGGAWLLVAARALLQLLRSDLRLGRPLLAALALLAALDWLCQRLLPPPAALVVLAGAGWIALSRLARPPRLPVATRAVLITGCDTGFGKETAKKLDAMGFTVLATVLDLNSPGALELRDLCSPRLKLLQMDLTKAEDISRVLEITKAHTASTGLWGLVNNAGLNIVVADVELSPVATFRKCMEVNFFGALELTKGLLPLLRHSRGRIVTVGSPAGDMPYPCLAAYGTSKAAIALLMDTFGCELLPWGIKVSIIKPGCFKTDAVTNVNLWEKRKQLLLANIPRELLQAYGEDYIEHVHGQFLNSLRMALPDLSPVVDAIIDALLAAQPRSRYYPGRGLGLMYFIHHYLPEGLRRCFLQNFFINHLLPRALRPGQHGPAPA.

82 to 111 contacts NAD(+); sequence TRAVLITGCDTGFGKETAKKLDAMGFTVLA. Position 219 (serine 219) interacts with substrate. Tyrosine 232 serves as the catalytic Proton acceptor.

The protein belongs to the short-chain dehydrogenases/reductases (SDR) family. In terms of assembly, interacts with ligand-free cytoplasmic NR3C2. Highly expressed in kidney. Also found in colon and small intestine. Not expressed in the adrenal gland. Expressed in uterus.

It localises to the microsome. The protein localises to the endoplasmic reticulum. The enzyme catalyses an 11beta-hydroxysteroid + NAD(+) = an 11-oxosteroid + NADH + H(+). The catalysed reaction is corticosterone + NAD(+) = 11-dehydrocorticosterone + NADH + H(+). It catalyses the reaction 11beta,17beta-dihydroxyandrost-4-ene-3-one + NAD(+) = 17beta-hydroxyandrost-4-ene-3,11-dione + NADH + H(+). It carries out the reaction 11beta-hydroxyandrost-4-ene-3,17-dione + NAD(+) = androst-4-ene-3,11,17-trione + NADH + H(+). It participates in steroid metabolism. Its activity is regulated as follows. Inhibited by glycyrrhetinic acid. Induced by progesterone, through the Ihh signaling pathway. Functionally, catalyzes the conversion of biologically active 11beta-hydroxyglucocorticoids (11beta-hydroxysteroid) such as corticosterone, to inactive 11-ketoglucocorticoids (11-oxosteroid) such as 11-dehydrocorticosterone, in the presence of NAD(+). Functions as a dehydrogenase (oxidase), thereby decreasing the concentration of active glucocorticoids, thus protecting the nonselective mineralocorticoid receptor from occupation by glucocorticoids. Plays an important role in maintaining glucocorticoids balance during preimplantation and protects the fetus from excessive maternal corticosterone exposure. Catalyzes the oxidation of 11beta-hydroxytestosterone (11beta,17beta-dihydroxyandrost-4-ene-3-one) to 11-ketotestosterone (17beta-hydroxyandrost-4-ene-3,11-dione), a major bioactive androgen. Catalyzes the conversion of 11beta-hydroxyandrostenedione (11beta-hydroxyandrost-4-ene-3,17-dione) to 11-ketoandrostenedione (androst-4-ene-3,11,17-trione), which can be further metabolized to 11-ketotestosterone. Converts 7-beta-25-dihydroxycholesterol to 7-oxo-25-hydroxycholesterol in vitro. 7-beta-25-dihydroxycholesterol (not 7-oxo-25-hydroxycholesterol) acts as a ligand for the G-protein-coupled receptor (GPCR) Epstein-Barr virus-induced gene 2 (EBI2) and may thereby regulate immune cell migration. In Mus musculus (Mouse), this protein is 11-beta-hydroxysteroid dehydrogenase type 2 (Hsd11b2).